A 414-amino-acid chain; its full sequence is MQVYAVGGAVRDQLLGKPSQDRDYVVVGATPADMEAAGFKPVGKDFPVFLHPHTKAEYALARTERKTAVGYKGFAFYTGADVTLEEDLVRRDLTINAMAQAVDEHDNLVGPVIDPYGGQKDLAARKFRHVSDAFAEDPVRILRVARFAARFHEFTVAPETVALMRKIVDAGEVDALVPERVWQELSRGLMEAKPSRMFDVLRECGALAHLLPELDRLWGVPQRPEYHPEVDTGVHVMMVIDYAASVGASLPVRFAAMAHDLGKGTTPEDMLPRHIGHEQRGVKLLEAICQRLRVPNDCRELALVVAREHGNIHRSTEFGAAALTRLVERCDALRKPERFAEALLACEADARGRLGFADKDYPQADRLLAARDAAASVDAGAIAKACGDKVDQIKDRVHKARVAAVAQRLGMAEE.

Positions 8 and 11 each coordinate ATP. CTP is bound by residues G8 and R11. Mg(2+)-binding residues include D21 and D23. The ATP site is built by R91, R143, and R146. R91, R143, and R146 together coordinate CTP. The 102-residue stretch at 232 to 333 folds into the HD domain; sequence TGVHVMMVID…TRLVERCDAL (102 aa).

It belongs to the tRNA nucleotidyltransferase/poly(A) polymerase family. Bacterial CCA-adding enzyme type 1 subfamily. In terms of assembly, monomer. Can also form homodimers and oligomers. The cofactor is Mg(2+). It depends on Ni(2+) as a cofactor.

The catalysed reaction is a tRNA precursor + 2 CTP + ATP = a tRNA with a 3' CCA end + 3 diphosphate. It carries out the reaction a tRNA with a 3' CCA end + 2 CTP + ATP = a tRNA with a 3' CCACCA end + 3 diphosphate. Functionally, catalyzes the addition and repair of the essential 3'-terminal CCA sequence in tRNAs without using a nucleic acid template. Adds these three nucleotides in the order of C, C, and A to the tRNA nucleotide-73, using CTP and ATP as substrates and producing inorganic pyrophosphate. tRNA 3'-terminal CCA addition is required both for tRNA processing and repair. Also involved in tRNA surveillance by mediating tandem CCA addition to generate a CCACCA at the 3' terminus of unstable tRNAs. While stable tRNAs receive only 3'-terminal CCA, unstable tRNAs are marked with CCACCA and rapidly degraded. In Cupriavidus metallidurans (strain ATCC 43123 / DSM 2839 / NBRC 102507 / CH34) (Ralstonia metallidurans), this protein is Multifunctional CCA protein.